The sequence spans 556 residues: Delta-1-pyrroline-5-carboxylate dehydrogenase, mitochondrial (556 aa).

Residues 1-17 constitute a mitochondrion transit peptide; the sequence is MLRARSAVSQSWKGFKT. NAD(+) is bound by residues lysine 226 and 279 to 283; that span reads GSVPT. Glutamate 307 functions as the Proton acceptor in the catalytic mechanism. Cysteine 341 serves as the catalytic Nucleophile. Residue glutamate 440 participates in NAD(+) binding. Residue serine 506 participates in substrate binding.

The protein belongs to the aldehyde dehydrogenase family.

The protein resides in the mitochondrion matrix. It carries out the reaction L-glutamate 5-semialdehyde + NAD(+) + H2O = L-glutamate + NADH + 2 H(+). Its pathway is amino-acid degradation; L-proline degradation into L-glutamate; L-glutamate from L-proline: step 2/2. Irreversible conversion of delta-1-pyrroline-5-carboxylate (P5C), derived either from proline or ornithine, to glutamate. This is a necessary step in the pathway interconnecting the urea and tricarboxylic acid cycles. The protein is Delta-1-pyrroline-5-carboxylate dehydrogenase, mitochondrial (aldh4a1) of Danio rerio (Zebrafish).